Consider the following 271-residue polypeptide: RELT-like protein 1 (271 aa).

A signal peptide spans 1–23 (MAPRALPGSAVLAAAVFVGGAVS). Residues 24-57 (SPLVAPDNGSSRTLHSRTETTPSPSNDTGNGHPE) are Extracellular-facing. Residues 28 to 53 (APDNGSSRTLHSRTETTPSPSNDTGN) form a disordered region. Asparagine 31 and asparagine 49 each carry an N-linked (GlcNAc...) asparagine glycan. Over residues 31–52 (NGSSRTLHSRTETTPSPSNDTG) the composition is skewed to polar residues. The chain crosses the membrane as a helical span at residues 58-78 (YIAYALVPVFFIMGLFGVLIC). The Cytoplasmic portion of the chain corresponds to 79-271 (HLLKKKGYRC…PVKRERSGTE (193 aa)). Residues 89–113 (TTEAEQDIEEEKVEKIELNDSVNEN) are a coiled coil. Residues serine 109 and serine 114 each carry the phosphoserine modification. Disordered regions lie at residues 145–173 (DPESPVTPSTPGSPPVSPGPLSPGGTPGK) and 233–271 (VEHKSNQKERRSLMSVSGAETVNGEVPATPVKRERSGTE). A compositionally biased stretch (pro residues) spans 155-165 (PGSPPVSPGPL). The segment covering 233–244 (VEHKSNQKERRS) has biased composition (basic and acidic residues). A phosphoserine mark is found at serine 244 and serine 247.

This sequence belongs to the RELT family. Interacts with RELT, RELL2 and OXSR1. Interacts with PLSCR1. In terms of processing, phosphorylated in vitro by OXSR1. As to expression, widely expressed. Expressed at highest levels in the placenta, skeletal muscle, spleen and testis.

It localises to the cell membrane. Induces activation of MAPK14/p38 cascade, when overexpressed. Induces apoptosis, when overexpressed. The chain is RELT-like protein 1 (RELL1) from Homo sapiens (Human).